The following is a 348-amino-acid chain: Flagellar P-ring protein (348 aa).

A signal peptide spans 1-16 (MRVLTIFLLFMTSIFA).

This sequence belongs to the FlgI family. As to quaternary structure, the basal body constitutes a major portion of the flagellar organelle and consists of four rings (L,P,S, and M) mounted on a central rod.

The protein localises to the periplasm. The protein resides in the bacterial flagellum basal body. Functionally, assembles around the rod to form the L-ring and probably protects the motor/basal body from shearing forces during rotation. This Campylobacter jejuni subsp. doylei (strain ATCC BAA-1458 / RM4099 / 269.97) protein is Flagellar P-ring protein.